Reading from the N-terminus, the 274-residue chain is Lectin-like protein (274 aa).

The N-terminal stretch at 1–19 (MKIHKLCFLALLLAHTTSA) is a signal peptide. Residues 28–268 (TSELVFLGDA…RHDIWSWTFQ (241 aa)) are legume-lectin like. Positions 62-81 (SHGQSLWSTPVPFKPSSNSS) are disordered. N-linked (GlcNAc...) asparagine glycosylation occurs at Asn129. Ser238 carries the post-translational modification Phosphoserine.

Belongs to the leguminous lectin family. As to expression, expressed in seedlings and leaves of adult plants.

It is found in the secreted. The protein resides in the extracellular space. It localises to the apoplast. Its subcellular location is the cell membrane. In terms of biological role, plays a positive role in the effector-triggered immunity (ETI) response. Involved in salicylic acid (SA)-mediated processes occurring in ETI response, but is not involved in the autophagy process. Promotes systemic rather than local immunity. Essential for systemic acquired resistance (SAR), but not necessary for immune signaling downstream of SA. May act in parallel with SA. This chain is Lectin-like protein, found in Arabidopsis thaliana (Mouse-ear cress).